Here is an 80-residue protein sequence, read N- to C-terminus: Small ribosomal subunit protein uS17 (80 aa).

The protein belongs to the universal ribosomal protein uS17 family. As to quaternary structure, part of the 30S ribosomal subunit.

In terms of biological role, one of the primary rRNA binding proteins, it binds specifically to the 5'-end of 16S ribosomal RNA. This is Small ribosomal subunit protein uS17 from Cereibacter sphaeroides (strain ATCC 17025 / ATH 2.4.3) (Rhodobacter sphaeroides).